The sequence spans 217 residues: MTDSEAERAERAAFILSLRRRGIRDLAVLRALELVPRGLFVDPTLRRHAYEDVALPIACGQTMSQPSLVALMTEALALNAEHTVLEIGTGSGYQAAVLSHLAAQVVTMDRYRALVGEAQTRFQVLGLRNVAAFVGDGTQGLPGRAPYDRIMITAATGEVPRALVDQLKPGGVLIAPIGAPREVQKLRRFIKDGGNLEASDLMDVRFVPLVAGVAALL.

The active site involves serine 64.

Belongs to the methyltransferase superfamily. L-isoaspartyl/D-aspartyl protein methyltransferase family.

It is found in the cytoplasm. The catalysed reaction is [protein]-L-isoaspartate + S-adenosyl-L-methionine = [protein]-L-isoaspartate alpha-methyl ester + S-adenosyl-L-homocysteine. In terms of biological role, catalyzes the methyl esterification of L-isoaspartyl residues in peptides and proteins that result from spontaneous decomposition of normal L-aspartyl and L-asparaginyl residues. It plays a role in the repair and/or degradation of damaged proteins. This is Protein-L-isoaspartate O-methyltransferase from Azorhizobium caulinodans (strain ATCC 43989 / DSM 5975 / JCM 20966 / LMG 6465 / NBRC 14845 / NCIMB 13405 / ORS 571).